We begin with the raw amino-acid sequence, 208 residues long: FMRFamide-like neuropeptide 18 (208 aa).

The N-terminal stretch at 1–21 is a signal peptide; it reads MQRWSGVLLISLCCLLRGALA. Positions 22-83 are excised as a propeptide; sequence YTEPIYEIVE…VWEKRESSVQ (62 aa). F93 carries the post-translational modification Phenylalanine amide. Residues 97–101 constitute a propeptide that is removed on maturation; sequence AYFDE. F111 is modified (phenylalanine amide). The propeptide occupies 115–119; sequence SYFDE. F129 is modified (phenylalanine amide). A propeptide spanning residues 133-137 is cleaved from the precursor; it reads DVPMD. F147 carries the post-translational modification Phenylalanine amide. Positions 151-158 are excised as a propeptide; sequence DYMADSFD. A phenylalanine amide mark is found at F169 and F180. Positions 184–195 are excised as a propeptide; sequence SDLEEHYAGVLL. F205 carries the post-translational modification Phenylalanine amide.

Belongs to the FARP (FMRFamide related peptide) family. May be processed by convertase egl-3. In terms of tissue distribution, expressed in head neurons and weakly in ventral nerve cord. Expressed in the interneurons AVA, AIY and RIG, the motor neuron RIM and the pharyngeal neurons M2 and M3. EMPGVLRF-amide: Expressed in cholinergic pharyngeal motoneurons M2 and M3.

Its subcellular location is the secreted. Its function is as follows. FMRFamide-like neuropeptides. Ligand to G-protein coupled receptor npr-1. Involved in modulating locomotion quiescence during the sleep-like state called lethargus which occurs during molting between larval and adult stages, acting via npr-1. Together with flp-1, plays a homeostatic role by acting on the GABAergic neural transmission at neuromuscular junctions to prevent overexcitation of the locomotor circuit. Plays a role in the navigational capacity of sperm and the targeting of sperm derived from males to the fertilization site in the uterus of hermaphrodites. In terms of biological role, SVPGVLRF-amide: Excites muscle tension. Functionally, activates the G-protein coupled receptor npr-1 more effectively than other flp-18 peptides. Inhibits the activity of dissected pharyngeal myogenic muscle system. In Caenorhabditis elegans, this protein is FMRFamide-like neuropeptide 18.